The primary structure comprises 574 residues: Secreted lipase 1 (574 aa).

Positions 1 to 17 are cleaved as a signal peptide; that stretch reads MKLSLVPIFALLSTAFA. The cysteines at positions 95 and 132 are disulfide-linked. Residue Ser244 is the Acyl-ester intermediate of the active site. A disulfide bridge links Cys303 with Cys312. Asn323 is a glycosylation site (N-linked (GlcNAc...) asparagine). Glu376 acts as the Charge relay system in catalysis. Asn386 is a glycosylation site (N-linked (GlcNAc...) asparagine). His489 functions as the Charge relay system in the catalytic mechanism. N-linked (GlcNAc...) asparagine glycosylation occurs at Asn524.

The protein belongs to the type-B carboxylesterase/lipase family.

Its subcellular location is the secreted. The enzyme catalyses a carboxylic ester + H2O = an alcohol + a carboxylate + H(+). In terms of biological role, secreted lipase that allows the use of hydrolyzed lipids as carbon sources. Has highest activity with methyl umbelliferyl oleate (C18:1), whereas much lower activities are obtained with the respective esters of palmitate (C16:0) and stearate (C18:0) (24% and 12% of the activity obtained with umbelliferyl oleate, respectively). Hydrolyzes 1- and 3-positioned ester bonds in preference to 2-positioned ester bonds. The production rate of monoglycerides is lower than that of diacylglycerides. Seems not required for the penetration of intact host tissue. The protein is Secreted lipase 1 of Botryotinia fuckeliana (strain B05.10) (Noble rot fungus).